A 133-amino-acid chain; its full sequence is Small ribosomal subunit protein uS8 (133 aa).

Belongs to the universal ribosomal protein uS8 family. As to quaternary structure, part of the 30S ribosomal subunit. Contacts proteins S5 and S12.

Functionally, one of the primary rRNA binding proteins, it binds directly to 16S rRNA central domain where it helps coordinate assembly of the platform of the 30S subunit. This Chlamydia pneumoniae (Chlamydophila pneumoniae) protein is Small ribosomal subunit protein uS8.